The chain runs to 360 residues: S-adenosylmethionine:tRNA ribosyltransferase-isomerase (360 aa).

Belongs to the QueA family. Monomer.

Its subcellular location is the cytoplasm. The enzyme catalyses 7-aminomethyl-7-carbaguanosine(34) in tRNA + S-adenosyl-L-methionine = epoxyqueuosine(34) in tRNA + adenine + L-methionine + 2 H(+). The protein operates within tRNA modification; tRNA-queuosine biosynthesis. In terms of biological role, transfers and isomerizes the ribose moiety from AdoMet to the 7-aminomethyl group of 7-deazaguanine (preQ1-tRNA) to give epoxyqueuosine (oQ-tRNA). The sequence is that of S-adenosylmethionine:tRNA ribosyltransferase-isomerase from Burkholderia pseudomallei (strain K96243).